Consider the following 351-residue polypeptide: Phosphoribosylformylglycinamidine cyclo-ligase (351 aa).

Belongs to the AIR synthase family.

It localises to the cytoplasm. The enzyme catalyses 2-formamido-N(1)-(5-O-phospho-beta-D-ribosyl)acetamidine + ATP = 5-amino-1-(5-phospho-beta-D-ribosyl)imidazole + ADP + phosphate + H(+). It participates in purine metabolism; IMP biosynthesis via de novo pathway; 5-amino-1-(5-phospho-D-ribosyl)imidazole from N(2)-formyl-N(1)-(5-phospho-D-ribosyl)glycinamide: step 2/2. In Burkholderia lata (strain ATCC 17760 / DSM 23089 / LMG 22485 / NCIMB 9086 / R18194 / 383), this protein is Phosphoribosylformylglycinamidine cyclo-ligase.